The primary structure comprises 167 residues: Endoribonuclease YbeY (167 aa).

Positions 131, 135, and 141 each coordinate Zn(2+).

It belongs to the endoribonuclease YbeY family. Requires Zn(2+) as cofactor.

It is found in the cytoplasm. Its function is as follows. Single strand-specific metallo-endoribonuclease involved in late-stage 70S ribosome quality control and in maturation of the 3' terminus of the 16S rRNA. This is Endoribonuclease YbeY from Rickettsia akari (strain Hartford).